The sequence spans 209 residues: ATP phosphoribosyltransferase (209 aa).

It belongs to the ATP phosphoribosyltransferase family. Short subfamily. Heteromultimer composed of HisG and HisZ subunits.

Its subcellular location is the cytoplasm. The catalysed reaction is 1-(5-phospho-beta-D-ribosyl)-ATP + diphosphate = 5-phospho-alpha-D-ribose 1-diphosphate + ATP. It participates in amino-acid biosynthesis; L-histidine biosynthesis; L-histidine from 5-phospho-alpha-D-ribose 1-diphosphate: step 1/9. In terms of biological role, catalyzes the condensation of ATP and 5-phosphoribose 1-diphosphate to form N'-(5'-phosphoribosyl)-ATP (PR-ATP). Has a crucial role in the pathway because the rate of histidine biosynthesis seems to be controlled primarily by regulation of HisG enzymatic activity. This chain is ATP phosphoribosyltransferase, found in Caldicellulosiruptor saccharolyticus (strain ATCC 43494 / DSM 8903 / Tp8T 6331).